A 428-amino-acid chain; its full sequence is MARVVRIFKTLRNHWKKSTVGFCLLAYGSHWLYGKHCDNLLRRAACEEAQVFGNHQILPHSAIKKATVFLNPAACKGKARTLFEKNAAPVLHLAGIDITVVKTDYEGQAKKLLELMEKTDLIIVAGGDGTVQEVITGLLRRDDEASFSKIPIGFIPLGGTNTLSHTLYPERENKVEQITEATLSILKGETVPLDVLQIKGEQDQPVFAVQGIRWGSYRDASVKVSKYWYLGPLKARAAHLFSALKEWPQQHQASISYLGPAERPPEEPEQKPSRPPLYVRIYRRLALYWSPPKVEVPVEPTPEPWEEAQLSAVELSITTQNHQPDLLRTLDSMSIHIEPDTISKGKFIQLGAQKMTDPLLHPEDSQVLLASRCSLHLPQGTEGHFSIDSEEYEAMSVDVTLLPRKLHFLCHPTRKQELLQSPTATAQS.

The tract at residues 18-34 (STVGFCLLAYGSHWLYG) is hydrophobic. The 142-residue stretch at 61 to 202 (SAIKKATVFL…LDVLQIKGEQ (142 aa)) folds into the DAGKc domain.

The protein belongs to the AGK family. Component of the TIM22 complex. The cofactor is Mg(2+).

It localises to the mitochondrion inner membrane. The protein localises to the mitochondrion intermembrane space. The enzyme catalyses a monoacylglycerol + ATP = a monoacyl-sn-glycero-3-phosphate + ADP + H(+). The catalysed reaction is a 1,2-diacyl-sn-glycerol + ATP = a 1,2-diacyl-sn-glycero-3-phosphate + ADP + H(+). It catalyses the reaction an N-acylsphing-4-enine + ATP = an N-acylsphing-4-enine 1-phosphate + ADP + H(+). It carries out the reaction 1-(9Z-octadecenoyl)-sn-glycerol + ATP = 1-(9Z-octadecenoyl)-sn-glycero-3-phosphate + ADP + H(+). The enzyme catalyses 1,2-di-(9Z-octadecenoyl)-sn-glycerol + ATP = 1,2-di-(9Z-octadecenoyl)-sn-glycero-3-phosphate + ADP + H(+). The catalysed reaction is a 1-acyl-sn-glycerol + ATP = a 1-acyl-sn-glycero-3-phosphate + ADP + H(+). It catalyses the reaction 1-hexadecanoyl-sn-glycerol + ATP = 1-hexadecanoyl-sn-glycero-3-phosphate + ADP + H(+). It carries out the reaction a 2-acylglycerol + ATP = a 2-acyl-sn-glycerol 3-phosphate + ADP + H(+). The enzyme catalyses 2-(5Z,8Z,11Z,14Z-eicosatetraenoyl)-glycerol + ATP = 2-(5Z,8Z,11Z,14Z-eicosatetraenoyl)-sn-glycero-3-phosphate + ADP + H(+). The catalysed reaction is 1-(5Z,8Z,11Z,14Z-eicosatetraenoyl)-sn-glycerol + ATP = 1-(5Z,8Z,11Z,14Z-eicosatetraenoyl)-sn-glycero-3-phosphate + ADP + H(+). It catalyses the reaction N-(hexanoyl)sphing-4-enine + ATP = N-hexanoylsphing-4-enine 1-phosphate + ADP + H(+). It participates in lipid metabolism; glycerolipid metabolism. Functionally, lipid kinase that can phosphorylate both monoacylglycerol and diacylglycerol to form lysophosphatidic acid (LPA) and phosphatidic acid (PA), respectively. Phosphorylates ceramide but not sphingosine. Phosphorylates 1,2-dioleoylglycerol more rapidly than 2,3-dioleoylglycerol. Independently of its lipid kinase activity, acts as a component of the TIM22 complex. The TIM22 complex mediates the import and insertion of multi-pass transmembrane proteins into the mitochondrial inner membrane by forming a twin-pore translocase that uses the membrane potential as the external driving force. The protein is Acylglycerol kinase, mitochondrial of Xenopus laevis (African clawed frog).